Consider the following 171-residue polypeptide: Adenine phosphoribosyltransferase (171 aa).

The protein belongs to the purine/pyrimidine phosphoribosyltransferase family. In terms of assembly, homodimer.

Its subcellular location is the cytoplasm. The catalysed reaction is AMP + diphosphate = 5-phospho-alpha-D-ribose 1-diphosphate + adenine. It functions in the pathway purine metabolism; AMP biosynthesis via salvage pathway; AMP from adenine: step 1/1. In terms of biological role, catalyzes a salvage reaction resulting in the formation of AMP, that is energically less costly than de novo synthesis. This is Adenine phosphoribosyltransferase from Prochlorococcus marinus (strain MIT 9515).